Here is a 316-residue protein sequence, read N- to C-terminus: Protein prune homolog 2 (316 aa).

The interval 1-24 is disordered; it reads MDIPLDAAEIRPEPPNSLDLNGSS. The CRAL-TRIO domain maps to 128–285; it reads IEPYKKVISH…TIVKLDEELR (158 aa). Residues 287-316 are disordered; it reads SESPKAGCLPNEPEMNTLEEEFENKMGDND.

The protein resides in the cytoplasm. This chain is Protein prune homolog 2 (Prune2), found in Xenopus tropicalis (Western clawed frog).